Reading from the N-terminus, the 111-residue chain is Large ribosomal subunit protein P2 (111 aa).

A disordered region spans residues 62–111 (LASVPSGGAGGAAAAGGAAAAGGAAEAAPEEAKEEEKEESDDDMGFGLFD). A compositionally biased stretch (low complexity) spans 76–88 (AGGAAAAGGAAEA). At S101 the chain carries Phosphoserine.

The protein belongs to the eukaryotic ribosomal protein P1/P2 family. P1 and P2 exist as dimers at the large ribosomal subunit.

Its function is as follows. Plays an important role in the elongation step of protein synthesis. This chain is Large ribosomal subunit protein P2, found in Podospora anserina (Pleurage anserina).